Consider the following 251-residue polypeptide: MTLNNQQLTLNCDMGESFGAWKMGADECVMPFVDMANIACGFHASDPNVMHDTITLANQHDVEIGAHPGYPDLQGFGRRSIKMTNDEITNMVIYQVGALQALCKAQYTDIGYIKPHGALYNDMMQSDGVFLAVVKAVALFKVPLMILASKENEKYLEIADDFDVPLLFEAFADRLYQDDGMLTPRTQPNAVLNSEHAILEQVRMLAESGRVKTASGQYILLEADTICVHGDNNESIALVQKIRQSLYTGGN.

This sequence belongs to the LamB/PxpA family. As to quaternary structure, forms a complex composed of PxpA, PxpB and PxpC.

It carries out the reaction 5-oxo-L-proline + ATP + 2 H2O = L-glutamate + ADP + phosphate + H(+). Functionally, catalyzes the cleavage of 5-oxoproline to form L-glutamate coupled to the hydrolysis of ATP to ADP and inorganic phosphate. In Vibrio campbellii (strain ATCC BAA-1116), this protein is 5-oxoprolinase subunit A.